A 268-amino-acid chain; its full sequence is MICOS complex subunit MIC27 (268 aa).

A mitochondrion-targeting transit peptide spans 1-27 (MAAIRMGKLTTMPAGLIYASVSVHAAK). Topologically, residues 28-110 (QEESKKQLVK…YVYLKNPPRD (83 aa)) are mitochondrial intermembrane. A helical transmembrane segment spans residues 111–129 (FLPKMGVITVSGLAGLVSA). The Mitochondrial matrix segment spans residues 130–137 (RKGSKFKK). The chain crosses the membrane as a helical span at residues 138 to 155 (ITYPLGLATLGATVCYPV). Residues 156–268 (QSVIIAKVTA…EDIDMYSTRS (113 aa)) lie on the Mitochondrial intermembrane side of the membrane. The span at 187-200 (SKEESLPKPKEKTK) shows a compositional bias: basic and acidic residues. The tract at residues 187-268 (SKEESLPKPK…EDIDMYSTRS (82 aa)) is disordered. Residue Ser204 is modified to Phosphoserine. Positions 249 to 260 (KLMDHGQSHPED) are enriched in basic and acidic residues.

Belongs to the apolipoprotein O/MICOS complex subunit Mic27 family. As to quaternary structure, component of the mitochondrial contact site and cristae organizing system (MICOS) complex, composed of at least MICOS10/MIC10, CHCHD3/MIC19, CHCHD6/MIC25, APOOL/MIC27, IMMT/MIC60, APOO/MIC23/MIC26 and MICOS13/MIC13. This complex was also known under the names MINOS or MitOS complex. The MICOS complex associates with mitochondrial outer membrane proteins SAMM50, MTX1 and MTX2 (together described as components of the mitochondrial outer membrane sorting assembly machinery (SAM) complex) and DNAJC11, mitochondrial inner membrane protein TMEM11 and with HSPA9. The MICOS and SAM complexes together with DNAJC11 are part of a large protein complex spanning both membranes termed the mitochondrial intermembrane space bridging (MIB) complex. Interacts with MICOS10/MIC10, IMMT/MIC60 and APOO/MIC23/MIC26.

Its subcellular location is the mitochondrion inner membrane. It localises to the mitochondrion. Component of the MICOS complex, a large protein complex of the mitochondrial inner membrane that plays crucial roles in the maintenance of crista junctions, inner membrane architecture, and formation of contact sites to the outer membrane. Specifically binds to cardiolipin (in vitro) but not to the precursor lipid phosphatidylglycerol. Plays a crucial role in crista junction formation and mitochondrial function,. This is MICOS complex subunit MIC27 (APOOL) from Homo sapiens (Human).